Reading from the N-terminus, the 305-residue chain is HPr kinase/phosphorylase (305 aa).

Active-site residues include histidine 138 and lysine 159. Residue 153-160 (GESGIGKS) coordinates ATP. A Mg(2+)-binding site is contributed by serine 160. The Proton acceptor; for phosphorylation activity. Proton donor; for dephosphorylation activity role is filled by aspartate 177. The segment at 201–210 (IEIRGIGILD) is important for the catalytic mechanism of both phosphorylation and dephosphorylation. Glutamate 202 contacts Mg(2+). Arginine 243 is a catalytic residue. An important for the catalytic mechanism of dephosphorylation region spans residues 264 to 269 (PVRPGR).

Belongs to the HPrK/P family. Homohexamer. The cofactor is Mg(2+).

The catalysed reaction is [HPr protein]-L-serine + ATP = [HPr protein]-O-phospho-L-serine + ADP + H(+). The enzyme catalyses [HPr protein]-O-phospho-L-serine + phosphate + H(+) = [HPr protein]-L-serine + diphosphate. Catalyzes the ATP- as well as the pyrophosphate-dependent phosphorylation of a specific serine residue in HPr, a phosphocarrier protein of the phosphoenolpyruvate-dependent sugar phosphotransferase system (PTS). HprK/P also catalyzes the pyrophosphate-producing, inorganic phosphate-dependent dephosphorylation (phosphorolysis) of seryl-phosphorylated HPr (P-Ser-HPr). The two antagonistic activities of HprK/P are regulated by several intracellular metabolites, which change their concentration in response to the absence or presence of rapidly metabolisable carbon sources (glucose, fructose, etc.) in the growth medium. Therefore, by controlling the phosphorylation state of HPr, HPrK/P is a sensor enzyme that plays a major role in the regulation of carbon metabolism and sugar transport: it mediates carbon catabolite repression (CCR), and regulates PTS-catalyzed carbohydrate uptake and inducer exclusion. The sequence is that of HPr kinase/phosphorylase from Caldanaerobacter subterraneus subsp. tengcongensis (strain DSM 15242 / JCM 11007 / NBRC 100824 / MB4) (Thermoanaerobacter tengcongensis).